The chain runs to 292 residues: Tetratricopeptide repeat protein 1 (292 aa).

Residues 20-125 (TDPQEAECLH…SSRLKEEGNE (106 aa)) form a disordered region. Basic and acidic residues-rich tracts occupy residues 36-49 (KEQH…KDVD) and 75-85 (GADKLENKPED). Residues 86–98 (DMNPSELDEEYLM) show a composition bias toward acidic residues. Position 90 is a phosphoserine (S90). A compositionally biased stretch (basic and acidic residues) spans 99 to 125 (ELEKNMPDEEKKRRREESSRLKEEGNE). 3 TPR repeats span residues 116–149 (SSRL…CPSC), 155–188 (SVLF…NPSY), and 189–222 (IRAI…DPSV).

As to quaternary structure, interacts with the GAP domain of NF1. Interacts (via TPR repeats) with HSP90AA1 and HSPA8.

This chain is Tetratricopeptide repeat protein 1 (TTC1), found in Bos taurus (Bovine).